The primary structure comprises 454 residues: SH2 domain-containing protein 4A (454 aa).

4 disordered regions span residues 45–65, 107–131, 152–177, and 237–302; these read AMER…NGKS, EQEA…KSQY, KEEL…SSSS, and RKSK…AYPQ. The segment covering 107-120 has biased composition (basic and acidic residues); that stretch reads EQEAEEPRKTHSEE. Phosphoserine is present on residues Ser118 and Ser124. Over residues 240-259 the composition is skewed to basic and acidic residues; it reads KAADEKRRSLAKQAREDYKR. A phosphoserine mark is found at Ser261 and Ser315. An SH2 domain is found at 347 to 440; it reads WFHGILTLKK…LGKELLLYPC (94 aa).

In terms of assembly, interacts with ESR1. In terms of tissue distribution, ubiquitously expressed. Aberrantly expressed in some cancers.

The protein localises to the cytoplasm. Its function is as follows. Inhibits estrogen-induced cell proliferation by competing with PLCG for binding to ESR1, blocking the effect of estrogen on PLCG and repressing estrogen-induced proliferation. May play a role in T-cell development and function. The polypeptide is SH2 domain-containing protein 4A (SH2D4A) (Homo sapiens (Human)).